The chain runs to 385 residues: Mitochondrial fission regulator 2 (385 aa).

N-acetylserine is present on S2. Position 119 is a phosphoserine (S119). The interval 195-268 (SVDPDQLPGS…SHHSKSQRNK (74 aa)) is disordered. Positions 207 to 216 (SPPPPPPLPP) are enriched in pro residues. Polar residues predominate over residues 231–257 (PGSNNICDSDNPATEMSKQNPAANKTN). Residues S291 and S328 each carry the phosphoserine modification. A disordered region spans residues 331–363 (KENRSWESSPFSSPETSRFGHHISQSEGQRTKE). Polar residues predominate over residues 336-346 (WESSPFSSPET).

This sequence belongs to the MTFR1 family.

Its subcellular location is the mitochondrion. In terms of biological role, may play a role in mitochondrial aerobic respiration essentially in the testis. Can also promote mitochondrial fission. This chain is Mitochondrial fission regulator 2 (MTFR2), found in Homo sapiens (Human).